The chain runs to 456 residues: Nuclear distribution protein PAC1 (456 aa).

The region spanning 9–41 (QADELHKSIIAYLSANDLPNTAAALRAELNLTE) is the LisH domain. A coiled-coil region spans residues 61–88 (TSIVRLQKKIMDLEARNAALQSELDNLT). WD repeat units lie at residues 114 to 153 (SHRDTINCIAFHPKFSSLASGSDDFTIKIWDWELGELEMT), 156 to 197 (GHTR…KNVR), 201 to 240 (GHDHSVSAVRFIPCRNLLASASRDKDVRIWDVTTGYCVRS), 243 to 282 (GHTGWVRDVCPSFDGNFLFSSGDDMTARLWDISAIPNPEN), 288 to 348 (GHEH…LMTL), 350 to 389 (GHDNWVRGIVFHPAGKYLLSVSDDRTLRCWDLSQEGKCVK), 394 to 437 (AHDR…PDVQ), and 439 to 456 (RCVIATGSVDRKLQIFAA).

It belongs to the WD repeat LIS1/nudF family. Self-associates. Interacts with NDL1 and dynein.

The protein localises to the cytoplasm. The protein resides in the cytoskeleton. It localises to the spindle pole. Its function is as follows. Positively regulates the activity of the minus-end directed microtubule motor protein dynein. May enhance dynein-mediated microtubule sliding by targeting dynein to the microtubule plus end. Required for nuclear migration during vegetative growth as well as development. Required for retrograde early endosome (EE) transport from the hyphal tip. Required for localization of dynein to the mitotic spindle poles. Recruits additional proteins to the dynein complex at SPBs. The polypeptide is Nuclear distribution protein PAC1 (Ajellomyces capsulatus (strain H143) (Darling's disease fungus)).